The chain runs to 340 residues: 4-hydroxy-2-oxovalerate aldolase (340 aa).

The region spanning 5 to 255 (IVITEVALRD…QTGVDLYKMM (251 aa)) is the Pyruvate carboxyltransferase domain. Position 13 to 14 (13 to 14 (RD)) interacts with substrate. D14 is a binding site for Mn(2+). Residue H17 is the Proton acceptor of the active site. Substrate-binding residues include S167 and H194. Mn(2+)-binding residues include H194 and H196. A substrate-binding site is contributed by Y285.

The protein belongs to the 4-hydroxy-2-oxovalerate aldolase family.

The catalysed reaction is (S)-4-hydroxy-2-oxopentanoate = acetaldehyde + pyruvate. The protein is 4-hydroxy-2-oxovalerate aldolase of Brevibacillus brevis (strain 47 / JCM 6285 / NBRC 100599).